Consider the following 579-residue polypeptide: Probable zinc metalloprotease EGY1, chloroplastic (579 aa).

Disordered stretches follow at residues 1–42 (MAAA…PASA) and 78–146 (GGGG…NEPP). A chloroplast-targeting transit peptide spans 1-44 (MAAAAAALASSPMVHLTASRLRLPRPARSPAAATPSPSPASAAC). Residues 16-42 (LTASRLRLPRPARSPAAATPSPSPASA) are compositionally biased toward low complexity. Over residues 78-92 (GGGGGGGGGGGGTGG) the composition is skewed to gly residues. Low complexity-rich tracts occupy residues 104–115 (AAAAEAKVGGAV) and 125–137 (SGSF…SSSG). The next 8 helical transmembrane spans lie at 272–292 (YVIS…LGIA), 321–341 (LLPF…IQLF), 357–377 (LSIP…ITQF), 392–412 (MAGP…GLLL), 419–439 (ASDL…LGLV), 452–472 (ATVA…TTAF), 505–525 (LLGL…YVLI), and 547–567 (AALI…WDEL).

The protein belongs to the peptidase M50B family.

Its subcellular location is the plastid. It is found in the chloroplast membrane. Its function is as follows. Probable membrane-associated metalloprotease that may be involved in chloroplast development. This Oryza sativa subsp. japonica (Rice) protein is Probable zinc metalloprotease EGY1, chloroplastic (EGY1).